The following is a 168-amino-acid chain: 2-C-methyl-D-erythritol 2,4-cyclodiphosphate synthase (168 aa).

A divalent metal cation contacts are provided by D13 and H15. 4-CDP-2-C-methyl-D-erythritol 2-phosphate-binding positions include 13-15 and 39-40; these read DVH and HS. H47 serves as a coordination point for a divalent metal cation. 4-CDP-2-C-methyl-D-erythritol 2-phosphate is bound by residues 61-63, 66-70, F144, and K147; these read DIG and FPDTD.

Belongs to the IspF family. As to quaternary structure, homotrimer. A divalent metal cation serves as cofactor.

The enzyme catalyses 4-CDP-2-C-methyl-D-erythritol 2-phosphate = 2-C-methyl-D-erythritol 2,4-cyclic diphosphate + CMP. The protein operates within isoprenoid biosynthesis; isopentenyl diphosphate biosynthesis via DXP pathway; isopentenyl diphosphate from 1-deoxy-D-xylulose 5-phosphate: step 4/6. Involved in the biosynthesis of isopentenyl diphosphate (IPP) and dimethylallyl diphosphate (DMAPP), two major building blocks of isoprenoid compounds. Catalyzes the conversion of 4-diphosphocytidyl-2-C-methyl-D-erythritol 2-phosphate (CDP-ME2P) to 2-C-methyl-D-erythritol 2,4-cyclodiphosphate (ME-CPP) with a corresponding release of cytidine 5-monophosphate (CMP). This is 2-C-methyl-D-erythritol 2,4-cyclodiphosphate synthase from Ralstonia pickettii (strain 12J).